Here is a 303-residue protein sequence, read N- to C-terminus: 1D-myo-inositol 2-acetamido-2-deoxy-alpha-D-glucopyranoside deacetylase (303 aa).

Residues histidine 15, aspartate 18, and histidine 157 each contribute to the Zn(2+) site.

It belongs to the MshB deacetylase family. Zn(2+) is required as a cofactor.

The enzyme catalyses 1D-myo-inositol 2-acetamido-2-deoxy-alpha-D-glucopyranoside + H2O = 1D-myo-inositol 2-amino-2-deoxy-alpha-D-glucopyranoside + acetate. In terms of biological role, catalyzes the deacetylation of 1D-myo-inositol 2-acetamido-2-deoxy-alpha-D-glucopyranoside (GlcNAc-Ins) in the mycothiol biosynthesis pathway. The sequence is that of 1D-myo-inositol 2-acetamido-2-deoxy-alpha-D-glucopyranoside deacetylase from Kribbella flavida (strain DSM 17836 / JCM 10339 / NBRC 14399).